We begin with the raw amino-acid sequence, 175 residues long: Protein TWIN SISTER of FT (175 aa).

This sequence belongs to the phosphatidylethanolamine-binding protein family.

The protein resides in the cytoplasm. Functionally, may form complexes with phosphorylated ligands by interfering with kinases and their effectors. In Arabidopsis thaliana (Mouse-ear cress), this protein is Protein TWIN SISTER of FT (TSF).